Here is a 259-residue protein sequence, read N- to C-terminus: Phosphate import ATP-binding protein PstB (259 aa).

The region spanning Ala-11 to Ile-254 is the ABC transporter domain. An ATP-binding site is contributed by Gly-43 to Ser-50.

This sequence belongs to the ABC transporter superfamily. Phosphate importer (TC 3.A.1.7) family. The complex is composed of two ATP-binding proteins (PstB), two transmembrane proteins (PstC and PstA) and a solute-binding protein (PstS).

The protein resides in the cell inner membrane. The enzyme catalyses phosphate(out) + ATP + H2O = ADP + 2 phosphate(in) + H(+). Its function is as follows. Part of the ABC transporter complex PstSACB involved in phosphate import. Responsible for energy coupling to the transport system. This chain is Phosphate import ATP-binding protein PstB, found in Dechloromonas aromatica (strain RCB).